The chain runs to 329 residues: 31 kDa immunogenic protein (329 aa).

A signal peptide spans 1–28 (MKFGSKIRRLAVAAVAGAIALGASFAVA).

This Brucella abortus biovar 1 (strain 9-941) protein is 31 kDa immunogenic protein (bcsP31).